Here is a 614-residue protein sequence, read N- to C-terminus: Elongation factor 4 (614 aa).

The region spanning 10–192 (ALIRNFCIIA…EIVARIPPPV (183 aa)) is the tr-type G domain. GTP contacts are provided by residues 22–27 (DHGKST) and 139–142 (NKID).

Belongs to the TRAFAC class translation factor GTPase superfamily. Classic translation factor GTPase family. LepA subfamily.

Its subcellular location is the cell membrane. The catalysed reaction is GTP + H2O = GDP + phosphate + H(+). Functionally, required for accurate and efficient protein synthesis under certain stress conditions. May act as a fidelity factor of the translation reaction, by catalyzing a one-codon backward translocation of tRNAs on improperly translocated ribosomes. Back-translocation proceeds from a post-translocation (POST) complex to a pre-translocation (PRE) complex, thus giving elongation factor G a second chance to translocate the tRNAs correctly. Binds to ribosomes in a GTP-dependent manner. This chain is Elongation factor 4, found in Thermobifida fusca (strain YX).